The primary structure comprises 155 residues: Large ribosomal subunit protein uL22c (155 aa).

The protein belongs to the universal ribosomal protein uL22 family. As to quaternary structure, part of the 50S ribosomal subunit.

Its subcellular location is the plastid. It localises to the chloroplast. This protein binds specifically to 23S rRNA. Its function is as follows. The globular domain of the protein is located near the polypeptide exit tunnel on the outside of the subunit, while an extended beta-hairpin is found that lines the wall of the exit tunnel in the center of the 70S ribosome. This Atropa belladonna (Belladonna) protein is Large ribosomal subunit protein uL22c (rpl22).